Consider the following 64-residue polypeptide: uncharacterized protein (64 aa).

The tract at residues 35-64 (TIRKPPIEHAAGPLGSTSRAGHRSYGGVAS) is disordered.

This is an uncharacterized protein from Mycobacterium tuberculosis (strain ATCC 25618 / H37Rv).